The sequence spans 348 residues: Heat-inducible transcription repressor HrcA (348 aa).

It belongs to the HrcA family.

Functionally, negative regulator of class I heat shock genes (grpE-dnaK-dnaJ and groELS operons). Prevents heat-shock induction of these operons. In Pelotomaculum thermopropionicum (strain DSM 13744 / JCM 10971 / SI), this protein is Heat-inducible transcription repressor HrcA.